A 214-amino-acid polypeptide reads, in one-letter code: GTP cyclohydrolase 1 (214 aa).

Zn(2+) is bound by residues cysteine 108, histidine 111, and cysteine 179.

Belongs to the GTP cyclohydrolase I family. In terms of assembly, toroid-shaped homodecamer, composed of two pentamers of five dimers.

The enzyme catalyses GTP + H2O = 7,8-dihydroneopterin 3'-triphosphate + formate + H(+). It functions in the pathway cofactor biosynthesis; 7,8-dihydroneopterin triphosphate biosynthesis; 7,8-dihydroneopterin triphosphate from GTP: step 1/1. In Shewanella putrefaciens (strain CN-32 / ATCC BAA-453), this protein is GTP cyclohydrolase 1.